A 329-amino-acid polypeptide reads, in one-letter code: Putative 1-aminocyclopropane-1-carboxylate deaminase (329 aa).

Position 54 is an N6-(pyridoxal phosphate)lysine (Lys54).

The protein belongs to the ACC deaminase/D-cysteine desulfhydrase family. Pyridoxal 5'-phosphate serves as cofactor.

It carries out the reaction 1-aminocyclopropane-1-carboxylate + H2O = 2-oxobutanoate + NH4(+). This Pyrococcus furiosus (strain ATCC 43587 / DSM 3638 / JCM 8422 / Vc1) protein is Putative 1-aminocyclopropane-1-carboxylate deaminase.